The chain runs to 557 residues: Urocanate hydratase (557 aa).

The disordered stretch occupies residues M1–N20. NAD(+) is bound by residues G52–G53, Q130, G176–G178, E196, R201, N242–A243, Q263–H267, Y273–L274, and Y322. The active site involves C410. G492 lines the NAD(+) pocket.

Belongs to the urocanase family. The cofactor is NAD(+).

It is found in the cytoplasm. It carries out the reaction 4-imidazolone-5-propanoate = trans-urocanate + H2O. It participates in amino-acid degradation; L-histidine degradation into L-glutamate; N-formimidoyl-L-glutamate from L-histidine: step 2/3. In terms of biological role, catalyzes the conversion of urocanate to 4-imidazolone-5-propionate. This is Urocanate hydratase from Brucella melitensis biotype 1 (strain ATCC 23456 / CCUG 17765 / NCTC 10094 / 16M).